The following is an 854-amino-acid chain: Protein translocase subunit SecA (854 aa).

Residues Gln81, 99-103 (GEGKT), and Asp487 contribute to the ATP site.

Belongs to the SecA family. Monomer and homodimer. Part of the essential Sec protein translocation apparatus which comprises SecA, SecYEG and auxiliary proteins SecDF. Other proteins may also be involved.

Its subcellular location is the cell membrane. The protein localises to the cytoplasm. The enzyme catalyses ATP + H2O + cellular proteinSide 1 = ADP + phosphate + cellular proteinSide 2.. Its function is as follows. Part of the Sec protein translocase complex. Interacts with the SecYEG preprotein conducting channel. Has a central role in coupling the hydrolysis of ATP to the transfer of proteins into and across the cell membrane, serving as an ATP-driven molecular motor driving the stepwise translocation of polypeptide chains across the membrane. The chain is Protein translocase subunit SecA from Mycoplasma mobile (strain ATCC 43663 / 163K / NCTC 11711) (Mesomycoplasma mobile).